Consider the following 96-residue polypeptide: MKFRPLGDRVLVKRVEEETKTKGGIIIPDTVKEKPQEGEVVAVGPGARNDKGDIVALDVKAGDRILFGKWSGTEVKVDGQDLLIMKESDVLGIVEA.

It belongs to the GroES chaperonin family. Heptamer of 7 subunits arranged in a ring. Interacts with the chaperonin GroEL.

The protein localises to the cytoplasm. Functionally, together with the chaperonin GroEL, plays an essential role in assisting protein folding. The GroEL-GroES system forms a nano-cage that allows encapsulation of the non-native substrate proteins and provides a physical environment optimized to promote and accelerate protein folding. GroES binds to the apical surface of the GroEL ring, thereby capping the opening of the GroEL channel. The protein is Co-chaperonin GroES of Caulobacter sp. (strain K31).